A 60-amino-acid polypeptide reads, in one-letter code: Large ribosomal subunit protein bL32 (60 aa).

The segment covering 1–19 has biased composition (basic residues); the sequence is MGVPKRKTSKGRRDKRRAH. A disordered region spans residues 1–20; it reads MGVPKRKTSKGRRDKRRAHL.

This sequence belongs to the bacterial ribosomal protein bL32 family.

In Syntrophobacter fumaroxidans (strain DSM 10017 / MPOB), this protein is Large ribosomal subunit protein bL32.